The primary structure comprises 426 residues: Phosphomethylpyrimidine synthase (426 aa).

Residues Asn-65, Met-94, Tyr-123, His-162, Ser-184–Gly-186, Asp-225–Arg-228, and Glu-264 each bind substrate. Zn(2+) is bound at residue His-268. Residue Tyr-291 coordinates substrate. His-332 provides a ligand contact to Zn(2+). [4Fe-4S] cluster-binding residues include Cys-408, Cys-411, and Cys-415.

It belongs to the ThiC family. [4Fe-4S] cluster is required as a cofactor.

It catalyses the reaction 5-amino-1-(5-phospho-beta-D-ribosyl)imidazole + S-adenosyl-L-methionine = 4-amino-2-methyl-5-(phosphooxymethyl)pyrimidine + CO + 5'-deoxyadenosine + formate + L-methionine + 3 H(+). It participates in cofactor biosynthesis; thiamine diphosphate biosynthesis. Catalyzes the synthesis of the hydroxymethylpyrimidine phosphate (HMP-P) moiety of thiamine from aminoimidazole ribotide (AIR) in a radical S-adenosyl-L-methionine (SAM)-dependent reaction. This Methanococcus vannielii (strain ATCC 35089 / DSM 1224 / JCM 13029 / OCM 148 / SB) protein is Phosphomethylpyrimidine synthase.